The chain runs to 200 residues: Imidazoleglycerol-phosphate dehydratase (200 aa).

Belongs to the imidazoleglycerol-phosphate dehydratase family.

The protein resides in the cytoplasm. The catalysed reaction is D-erythro-1-(imidazol-4-yl)glycerol 3-phosphate = 3-(imidazol-4-yl)-2-oxopropyl phosphate + H2O. The protein operates within amino-acid biosynthesis; L-histidine biosynthesis; L-histidine from 5-phospho-alpha-D-ribose 1-diphosphate: step 6/9. In Chlorobium luteolum (strain DSM 273 / BCRC 81028 / 2530) (Pelodictyon luteolum), this protein is Imidazoleglycerol-phosphate dehydratase.